We begin with the raw amino-acid sequence, 82 residues long: Protein Rv1078A (82 aa).

Residues glycine 35–aspartate 54 show a composition bias toward basic residues. The disordered stretch occupies residues glycine 35–threonine 82.

It is found in the cytoplasm. The sequence is that of Protein Rv1078A from Mycobacterium tuberculosis (strain ATCC 25618 / H37Rv).